We begin with the raw amino-acid sequence, 336 residues long: Holliday junction branch migration complex subunit RuvB (336 aa).

A large ATPase domain (RuvB-L) region spans residues methionine 1–tyrosine 182. ATP contacts are provided by residues leucine 21, arginine 22, glycine 63, lysine 66, threonine 67, threonine 68, glutamate 129–tyrosine 131, arginine 172, tyrosine 182, and arginine 219. Threonine 67 is a Mg(2+) binding site. The interval threonine 183–glutamate 253 is small ATPAse domain (RuvB-S). Residues lysine 256–serine 336 form a head domain (RuvB-H) region. Positions 311 and 316 each coordinate DNA.

It belongs to the RuvB family. In terms of assembly, homohexamer. Forms an RuvA(8)-RuvB(12)-Holliday junction (HJ) complex. HJ DNA is sandwiched between 2 RuvA tetramers; dsDNA enters through RuvA and exits via RuvB. An RuvB hexamer assembles on each DNA strand where it exits the tetramer. Each RuvB hexamer is contacted by two RuvA subunits (via domain III) on 2 adjacent RuvB subunits; this complex drives branch migration. In the full resolvosome a probable DNA-RuvA(4)-RuvB(12)-RuvC(2) complex forms which resolves the HJ.

The protein resides in the cytoplasm. It carries out the reaction ATP + H2O = ADP + phosphate + H(+). Its function is as follows. The RuvA-RuvB-RuvC complex processes Holliday junction (HJ) DNA during genetic recombination and DNA repair, while the RuvA-RuvB complex plays an important role in the rescue of blocked DNA replication forks via replication fork reversal (RFR). RuvA specifically binds to HJ cruciform DNA, conferring on it an open structure. The RuvB hexamer acts as an ATP-dependent pump, pulling dsDNA into and through the RuvAB complex. RuvB forms 2 homohexamers on either side of HJ DNA bound by 1 or 2 RuvA tetramers; 4 subunits per hexamer contact DNA at a time. Coordinated motions by a converter formed by DNA-disengaged RuvB subunits stimulates ATP hydrolysis and nucleotide exchange. Immobilization of the converter enables RuvB to convert the ATP-contained energy into a lever motion, pulling 2 nucleotides of DNA out of the RuvA tetramer per ATP hydrolyzed, thus driving DNA branch migration. The RuvB motors rotate together with the DNA substrate, which together with the progressing nucleotide cycle form the mechanistic basis for DNA recombination by continuous HJ branch migration. Branch migration allows RuvC to scan DNA until it finds its consensus sequence, where it cleaves and resolves cruciform DNA. The chain is Holliday junction branch migration complex subunit RuvB from Lachnoclostridium phytofermentans (strain ATCC 700394 / DSM 18823 / ISDg) (Clostridium phytofermentans).